Consider the following 212-residue polypeptide: Large ribosomal subunit protein uL3 (212 aa).

It belongs to the universal ribosomal protein uL3 family. As to quaternary structure, part of the 50S ribosomal subunit. Forms a cluster with proteins L14 and L19.

One of the primary rRNA binding proteins, it binds directly near the 3'-end of the 23S rRNA, where it nucleates assembly of the 50S subunit. This Acetivibrio thermocellus (strain ATCC 27405 / DSM 1237 / JCM 9322 / NBRC 103400 / NCIMB 10682 / NRRL B-4536 / VPI 7372) (Clostridium thermocellum) protein is Large ribosomal subunit protein uL3.